We begin with the raw amino-acid sequence, 159 residues long: Transcription elongation factor A protein-like 1 (159 aa).

The tract at residues 1–121 is disordered; it reads MDKPRKENEE…QFKGDIHGRN (121 aa). Residues 17 to 34 show a composition bias toward basic and acidic residues; it reads KTDEERPPVEHSPEKQSP. Positions 37 to 54 are enriched in acidic residues; it reads QSSEEQSSEEEFFPEELL. Composition is skewed to basic and acidic residues over residues 64 to 80 and 95 to 119; these read SEER…DLFE and HKLE…DIHG.

Belongs to the TFS-II family. TFA subfamily.

It localises to the nucleus. Its function is as follows. May be involved in transcriptional regulation. Modulates various viral and cellular promoters in a promoter context-dependent manner. Does not bind DNA directly. The polypeptide is Transcription elongation factor A protein-like 1 (Gorilla gorilla gorilla (Western lowland gorilla)).